Consider the following 206-residue polypeptide: Glutathione peroxidase 1 (206 aa).

At serine 37 the chain carries Phosphoserine. The active site involves selenocysteine 52. Residue selenocysteine 52 is a non-standard amino acid, selenocysteine. Residues lysine 91, lysine 117, and lysine 151 each carry the N6-acetyllysine; alternate modification. Lysine 91, lysine 117, and lysine 151 each carry N6-succinyllysine; alternate. Phosphoserine occurs at positions 200 and 204.

Belongs to the glutathione peroxidase family. Homotetramer. Interacts with MIEN1. During periods of oxidative stress, Sec-52 may react with a superoxide radical, irreversibly lose hydroselenide and be converted to dehydroalanine.

It is found in the cytoplasm. Its subcellular location is the mitochondrion. The catalysed reaction is 2 glutathione + H2O2 = glutathione disulfide + 2 H2O. The enzyme catalyses a hydroperoxy polyunsaturated fatty acid + 2 glutathione = a hydroxy polyunsaturated fatty acid + glutathione disulfide + H2O. It catalyses the reaction tert-butyl hydroperoxide + 2 glutathione = tert-butanol + glutathione disulfide + H2O. It carries out the reaction cumene hydroperoxide + 2 glutathione = 2-phenylpropan-2-ol + glutathione disulfide + H2O. The catalysed reaction is (13S)-hydroperoxy-(9Z,11E)-octadecadienoate + 2 glutathione = (13S)-hydroxy-(9Z,11E)-octadecadienoate + glutathione disulfide + H2O. The enzyme catalyses (9S)-hydroperoxy-(10E,12Z)-octadecadienoate + 2 glutathione = (9S)-hydroxy-(10E,12Z)-octadecadienoate + glutathione disulfide + H2O. It catalyses the reaction (5S)-hydroperoxy-(6E,8Z,11Z,14Z)-eicosatetraenoate + 2 glutathione = (5S)-hydroxy-(6E,8Z,11Z,14Z)-eicosatetraenoate + glutathione disulfide + H2O. It carries out the reaction (12S)-hydroperoxy-(5Z,8Z,10E,14Z)-eicosatetraenoate + 2 glutathione = (12S)-hydroxy-(5Z,8Z,10E,14Z)-eicosatetraenoate + glutathione disulfide + H2O. The catalysed reaction is (12R)-hydroperoxy-(5Z,8Z,10E,14Z)-eicosatetraenoate + 2 glutathione = (12R)-hydroxy-(5Z,8Z,10E,14Z)-eicosatetraenoate + glutathione disulfide + H2O. The enzyme catalyses (15S)-hydroperoxy-(5Z,8Z,11Z,13E)-eicosatetraenoate + 2 glutathione = (15S)-hydroxy-(5Z,8Z,11Z,13E)-eicosatetraenoate + glutathione disulfide + H2O. It catalyses the reaction (5S)-hydroperoxy-(6E,8Z,11Z,14Z,17Z)-eicosapentaenoate + 2 glutathione = (5S)-hydroxy-(6E,8Z,11Z,14Z,17Z)-eicosapentaenoate + glutathione disulfide + H2O. It carries out the reaction (12S)-hydroperoxy-(5Z,8Z,10E,14Z,17Z)-eicosapentaenoate + 2 glutathione = (12S)-hydroxy-(5Z,8Z,10E,14Z,17Z)-eicosapentaenoate + glutathione disulfide + H2O. The catalysed reaction is (15S)-hydroperoxy-(5Z,8Z,11Z,13E,17Z)-eicosapentaenoate + 2 glutathione = (15S)-hydroxy-(5Z,8Z,11Z,13E,17Z)-eicosapentaenoate + glutathione disulfide + H2O. The enzyme catalyses (15S)-hydroperoxy-(11Z,13E)-eicosadienoate + 2 glutathione = (15S)-hydroxy-(11Z,13E)-eicosadienoate + glutathione disulfide + H2O. It catalyses the reaction (17S)-hydroperoxy-(4Z,7Z,10Z,13Z,15E,19Z)-docosahexaenoate + 2 glutathione = (17S)-hydroxy-(4Z,7Z,10Z,13Z,15E,19Z)-docosahexaenoate + glutathione disulfide + H2O. Its function is as follows. Catalyzes the reduction of hydroperoxides in a glutathione-dependent manner thus regulating cellular redox homeostasis. Can reduce small soluble hydroperoxides such as H2O2, cumene hydroperoxide and tert-butyl hydroperoxide, as well as several fatty acid-derived hydroperoxides. In platelets catalyzes the reduction of 12-hydroperoxyeicosatetraenoic acid, the primary product of the arachidonate 12-lipoxygenase pathway. The protein is Glutathione peroxidase 1 (GPX1) of Sus scrofa (Pig).